The chain runs to 264 residues: MNLLDIIIIGIVQGISEWLPISSKTQVLISSHYLLNLPIAIAYSFGLFMEMGSIGSATIYFRKDIMSVFRDRKLLLYLAIITIITGLVGVPLYIISDKLLKNAYDPSIPMIILGIALIVDGLYIRYSRIKIRSFKDLSLKNIILIGIAQGLAALPGVSRSGMTVSTMLFLGIKPDDAFRYSYLAYIPAAVGAVGTTILFSKTNISYVISLIGIGGVLISVISAFIIGMLTIDLLLRFAKRRNIYIIDFTLGGIAIVVSVLTILI.

7 consecutive transmembrane segments (helical) span residues 34-54 (LLNL…MGSI), 75-95 (LLYL…LYII), 104-124 (YDPS…GLYI), 137-157 (LSLK…LPGV), 180-200 (YSYL…ILFS), 207-227 (VISL…FIIG), and 243-263 (IYII…LTIL).

The protein belongs to the UppP family.

It is found in the cell membrane. The catalysed reaction is di-trans,octa-cis-undecaprenyl diphosphate + H2O = di-trans,octa-cis-undecaprenyl phosphate + phosphate + H(+). Its function is as follows. Catalyzes the dephosphorylation of undecaprenyl diphosphate (UPP). This chain is Undecaprenyl-diphosphatase, found in Sulfurisphaera tokodaii (strain DSM 16993 / JCM 10545 / NBRC 100140 / 7) (Sulfolobus tokodaii).